A 431-amino-acid chain; its full sequence is Protoheme IX farnesyltransferase, mitochondrial (431 aa).

The N-terminal 33 residues, 1–33 (MWRRSVVYRFSSRISVSSSLPNPRLIPWSRELC), are a transit peptide targeting the mitochondrion. The next 9 helical transmembrane spans lie at 109 to 129 (LVVA…AISF), 131 to 153 (GLCY…NQIF), 174 to 194 (ISVP…ACLL), 200 to 220 (MLAA…YTPL), 226 to 246 (INTW…WAAA), 255 to 275 (MILP…LAHL), 298 to 317 (IAAV…FIAY), 322 to 344 (TSSW…AFSF), and 356 to 376 (MFHA…LHRV).

The protein belongs to the ubiA prenyltransferase (TC 3.D.4.8) family.

The protein resides in the mitochondrion inner membrane. It catalyses the reaction heme b + (2E,6E)-farnesyl diphosphate + H2O = Fe(II)-heme o + diphosphate. Its function is as follows. Converts protoheme IX and farnesyl diphosphate to heme O. This Arabidopsis thaliana (Mouse-ear cress) protein is Protoheme IX farnesyltransferase, mitochondrial (COX10).